A 96-amino-acid chain; its full sequence is Probable quinol oxidase subunit 4 (96 aa).

The next 3 membrane-spanning stretches (helical) occupy residues 8–28, 37–57, and 68–88; these read TVGFIASIVLTLLAVFVTLYT, TIIFGFAFIQAAVQLLMFMHL, and FKVIFAIIITLVTVIGTYWVM.

It belongs to the cytochrome c oxidase bacterial subunit 4 family.

Its subcellular location is the cell membrane. It catalyses the reaction 2 a quinol + O2 = 2 a quinone + 2 H2O. Functionally, catalyzes quinol oxidation with the concomitant reduction of oxygen to water. The protein is Probable quinol oxidase subunit 4 (qoxD) of Staphylococcus haemolyticus (strain JCSC1435).